Reading from the N-terminus, the 203-residue chain is Protein Nef (203 aa).

Residues 1–25 are disordered; the sequence is MGNKWSKSWPQVRERMRRAPAPAAD. Gly-2 carries N-myristoyl glycine; by host lipidation. Position 6 is a phosphoserine; by host (Ser-6). Positions 59 to 62 are acidic; interacts with host PACS1 and PACS2; stabilizes the interaction of NEF/MHC-I with host AP1M1; necessary for MHC-I internalization; the sequence is TEEE. The segment at 66–75 is SH3-binding; interaction with Src family tyrosine kinases; it reads PVKPQIPLRP. The short motif at 69–72 is the PxxP; stabilizes the interaction of NEF/MHC-I with host AP1M1; necessary for MHC-I internalization element; that stretch reads PQIP. Residues 105–121 form a mediates dimerization, Nef-PTE1 interaction region; it reads EILDLWVHNTQGYFPDW. Residues 145-177 form a binding to ATP6V1H region; sequence VDPSEVEEANEGENNCLLHPICQHGIEDEEREV. The short motif at 161 to 162 is the Dileucine internalization motif; necessary for CD4 internalization element; sequence LL. A Diacidic; necessary for CD4 internalization motif is present at residues 171–172; sequence ED.

This sequence belongs to the lentivirus primate group Nef protein family. Monomer; cytosolic form. Homodimer; membrane bound form. Interacts with Nef associated p21-activated kinase (PAK2); this interaction activates PAK2. Associates with the Nef-MHC-I-AP1 complex; this complex is required for MHC-I internalization. Interacts (via C-terminus) with host PI3-kinase. Interacts with host PACS1; this interaction seems to be weak. Interacts with host PACS2. Interacts with host LCK and MAPK3; these interactions inhibit the kinase activity of the latter. Interacts with host ATP6V1H; this interaction may play a role in CD4 endocytosis. Associates with the CD4-Nef-AP2 complex; this complex is required for CD4 internalization. Interacts with host AP2 subunit alpha and AP2 subunit sigma2. Interacts with TCR-zeta chain; this interaction up-regulates the Fas ligand (FasL) surface expression. Interacts with host HCK, LYN, and SRC; these interactions activate the Src family kinases. Interacts with MAP3K5; this interaction inhibits the Fas and TNFR-mediated death signals. Interacts with beta-COP and PTE1. Interacts with human RACK1; this increases Nef phosphorylation by PKC. Interacts with TP53; this interaction decreases the half-life of TP53, protecting the infected cell against p53-mediated apoptosis. The virion-associated Nef proteins are cleaved by the viral protease to release the soluble C-terminal core protein. Nef is probably cleaved concomitantly with viral structural proteins on maturation of virus particles. In terms of processing, myristoylated. Post-translationally, phosphorylated on serine residues, probably by host PKCdelta and theta.

The protein localises to the host cell membrane. The protein resides in the virion. It localises to the secreted. It is found in the host Golgi apparatus membrane. Factor of infectivity and pathogenicity, required for optimal virus replication. Alters numerous pathways of T-lymphocyte function and down-regulates immunity surface molecules in order to evade host defense and increase viral infectivity. Alters the functionality of other immunity cells, like dendritic cells, monocytes/macrophages and NK cells. Its function is as follows. In infected CD4(+) T-lymphocytes, down-regulates the surface MHC-I, mature MHC-II, CD4, CD28, CCR5 and CXCR4 molecules. Mediates internalization and degradation of host CD4 through the interaction of with the cytoplasmic tail of CD4, the recruitment of AP-2 (clathrin adapter protein complex 2), internalization through clathrin coated pits, and subsequent transport to endosomes and lysosomes for degradation. Diverts host MHC-I molecules to the trans-Golgi network-associated endosomal compartments by an endocytic pathway to finally target them for degradation. MHC-I down-regulation may involve AP-1 (clathrin adapter protein complex 1) or possibly Src family kinase-ZAP70/Syk-PI3K cascade recruited by PACS2. In consequence infected cells are masked for immune recognition by cytotoxic T-lymphocytes. Decreasing the number of immune receptors also prevents reinfection by more HIV particles (superinfection). Down-regulates host SERINC3 and SERINC5 thereby excluding these proteins from the viral particles. Virion infectivity is drastically higher when SERINC3 or SERINC5 are excluded from the viral envelope, because these host antiviral proteins impair the membrane fusion event necessary for subsequent virion penetration. In terms of biological role, bypasses host T-cell signaling by inducing a transcriptional program nearly identical to that of anti-CD3 cell activation. Interaction with TCR-zeta chain up-regulates the Fas ligand (FasL). Increasing surface FasL molecules and decreasing surface MHC-I molecules on infected CD4(+) cells send attacking cytotoxic CD8+ T-lymphocytes into apoptosis. Functionally, plays a role in optimizing the host cell environment for viral replication without causing cell death by apoptosis. Protects the infected cells from apoptosis in order to keep them alive until the next virus generation is ready to strike. Inhibits the Fas and TNFR-mediated death signals by blocking MAP3K5/ASK1. Decreases the half-life of TP53, protecting the infected cell against p53-mediated apoptosis. Inhibits the apoptotic signals regulated by the Bcl-2 family proteins through the formation of a Nef/PI3-kinase/PAK2 complex that leads to activation of PAK2 and induces phosphorylation of host BAD. Extracellular Nef protein targets CD4(+) T-lymphocytes for apoptosis by interacting with CXCR4 surface receptors. The chain is Protein Nef from Human immunodeficiency virus type 1 group M subtype J (isolate SE9280) (HIV-1).